We begin with the raw amino-acid sequence, 263 residues long: 3-methyl-2-oxobutanoate hydroxymethyltransferase (263 aa).

Mg(2+) is bound by residues Asp-44 and Asp-83. 3-methyl-2-oxobutanoate is bound by residues 44-45, Asp-83, and Lys-112; that span reads DS. Glu-114 serves as a coordination point for Mg(2+). Residue Glu-181 is the Proton acceptor of the active site.

Belongs to the PanB family. In terms of assembly, homodecamer; pentamer of dimers. It depends on Mg(2+) as a cofactor.

It is found in the cytoplasm. It carries out the reaction 3-methyl-2-oxobutanoate + (6R)-5,10-methylene-5,6,7,8-tetrahydrofolate + H2O = 2-dehydropantoate + (6S)-5,6,7,8-tetrahydrofolate. It participates in cofactor biosynthesis; (R)-pantothenate biosynthesis; (R)-pantoate from 3-methyl-2-oxobutanoate: step 1/2. In terms of biological role, catalyzes the reversible reaction in which hydroxymethyl group from 5,10-methylenetetrahydrofolate is transferred onto alpha-ketoisovalerate to form ketopantoate. In Nitrosospira multiformis (strain ATCC 25196 / NCIMB 11849 / C 71), this protein is 3-methyl-2-oxobutanoate hydroxymethyltransferase.